The sequence spans 457 residues: Siroheme synthase (457 aa).

The precorrin-2 dehydrogenase /sirohydrochlorin ferrochelatase stretch occupies residues 1–204; that stretch reads MDHLPIFCQL…NDQKAITETT (204 aa). NAD(+) is bound by residues 22–23 and 43–44; these read DV and LA. Residue serine 128 is modified to Phosphoserine. Residues 216 to 457 form a uroporphyrinogen-III C-methyltransferase region; the sequence is GEVVLVGAGP…RDKLNWFSNH (242 aa). Proline 225 is an S-adenosyl-L-methionine binding site. Aspartate 248 serves as the catalytic Proton acceptor. The Proton donor role is filled by lysine 270. Residues 301–303, isoleucine 306, 331–332, methionine 382, and glycine 411 each bind S-adenosyl-L-methionine; these read GGD and TA.

It in the N-terminal section; belongs to the precorrin-2 dehydrogenase / sirohydrochlorin ferrochelatase family. This sequence in the C-terminal section; belongs to the precorrin methyltransferase family.

It catalyses the reaction uroporphyrinogen III + 2 S-adenosyl-L-methionine = precorrin-2 + 2 S-adenosyl-L-homocysteine + H(+). The catalysed reaction is precorrin-2 + NAD(+) = sirohydrochlorin + NADH + 2 H(+). The enzyme catalyses siroheme + 2 H(+) = sirohydrochlorin + Fe(2+). The protein operates within cofactor biosynthesis; adenosylcobalamin biosynthesis; precorrin-2 from uroporphyrinogen III: step 1/1. It participates in cofactor biosynthesis; adenosylcobalamin biosynthesis; sirohydrochlorin from precorrin-2: step 1/1. It functions in the pathway porphyrin-containing compound metabolism; siroheme biosynthesis; precorrin-2 from uroporphyrinogen III: step 1/1. Its pathway is porphyrin-containing compound metabolism; siroheme biosynthesis; siroheme from sirohydrochlorin: step 1/1. The protein operates within porphyrin-containing compound metabolism; siroheme biosynthesis; sirohydrochlorin from precorrin-2: step 1/1. In terms of biological role, multifunctional enzyme that catalyzes the SAM-dependent methylations of uroporphyrinogen III at position C-2 and C-7 to form precorrin-2 via precorrin-1. Then it catalyzes the NAD-dependent ring dehydrogenation of precorrin-2 to yield sirohydrochlorin. Finally, it catalyzes the ferrochelation of sirohydrochlorin to yield siroheme. This Escherichia coli O8 (strain IAI1) protein is Siroheme synthase.